A 71-amino-acid chain; its full sequence is Small ribosomal subunit protein bS21 (71 aa).

The protein belongs to the bacterial ribosomal protein bS21 family.

The protein is Small ribosomal subunit protein bS21 of Ruthia magnifica subsp. Calyptogena magnifica.